The primary structure comprises 403 residues: Phosphoglycerate kinase (403 aa).

Residues 24–26 (DLN), arginine 39, 62–65 (HLGR), arginine 121, and arginine 161 each bind substrate. Residues lysine 211, glycine 299, glutamate 330, and 359 to 362 (GGDS) contribute to the ATP site.

This sequence belongs to the phosphoglycerate kinase family. Monomer.

The protein localises to the cytoplasm. The enzyme catalyses (2R)-3-phosphoglycerate + ATP = (2R)-3-phospho-glyceroyl phosphate + ADP. Its pathway is carbohydrate degradation; glycolysis; pyruvate from D-glyceraldehyde 3-phosphate: step 2/5. The chain is Phosphoglycerate kinase from Rhodococcus erythropolis (strain PR4 / NBRC 100887).